A 261-amino-acid polypeptide reads, in one-letter code: Tryptophan synthase alpha chain (261 aa).

Active-site proton acceptor residues include Glu49 and Asp60.

It belongs to the TrpA family. Tetramer of two alpha and two beta chains.

The enzyme catalyses (1S,2R)-1-C-(indol-3-yl)glycerol 3-phosphate + L-serine = D-glyceraldehyde 3-phosphate + L-tryptophan + H2O. The protein operates within amino-acid biosynthesis; L-tryptophan biosynthesis; L-tryptophan from chorismate: step 5/5. Functionally, the alpha subunit is responsible for the aldol cleavage of indoleglycerol phosphate to indole and glyceraldehyde 3-phosphate. The protein is Tryptophan synthase alpha chain of Leifsonia xyli subsp. xyli (strain CTCB07).